The primary structure comprises 288 residues: MEPPDQCSQYMTSLLSPAVDDEKELQDMNAMVLSLTEEVKEEEEDAQPEPEQGTAAGEKLKSAGAQGGEEKDGGGEEKDGGGAGVPGHLWEGDLEGTSGSDGNVEDSDQSEKEPGQQYSRPQGAVGGLEPGNAQQPNVHAFTPLQLQELERIFQREQFPSEFLRRRLARSMNVTELAVQIWFENRRAKWRRHQRALMARNMLPFMAVGQPVMVTAAEAITAPLFISGMRDDYFWDHSHSSSLCFPMPPFPPPSLPLPLMLLPPMPPAGQAEFGPFPFVIVPSFTFPNV.

Residues 16–136 are disordered; that stretch reads SPAVDDEKEL…GLEPGNAQQP (121 aa). Over residues 39-48 the composition is skewed to acidic residues; it reads VKEEEEDAQP. A compositionally biased stretch (basic and acidic residues) spans 68 to 80; it reads GEEKDGGGEEKDG. Positions 134-193 form a DNA-binding region, homeobox; the sequence is QQPNVHAFTPLQLQELERIFQREQFPSEFLRRRLARSMNVTELAVQIWFENRRAKWRRHQ. The Nuclear localization signal motif lies at 186 to 195; it reads RAKWRRHQRA.

The protein belongs to the paired-like homeobox family. PEPP subfamily. Testis. Not detected in epididymis nor placenta. In testis, mainly expressed in germ cells, but also detected in somatic cells such as Sertoli cells, Leydig cells and peritubular cells.

The protein resides in the nucleus. Its function is as follows. Transcription factor maybe involved in reproductive processes. Modulates expression of target genes encoding proteins involved in processes relevant to spermatogenesis. This is Rhox homeobox family member 2 from Homo sapiens (Human).